The chain runs to 109 residues: Large ribosomal subunit protein uL18c (109 aa).

It belongs to the universal ribosomal protein uL18 family. In terms of assembly, part of the 50S ribosomal subunit; contacts the 5S rRNA.

It is found in the plastid. It localises to the chloroplast. Its function is as follows. Binds 5S rRNA, forms part of the central protuberance of the 50S subunit. This Cyanidioschyzon merolae (strain NIES-3377 / 10D) (Unicellular red alga) protein is Large ribosomal subunit protein uL18c (rpl18).